The chain runs to 1360 residues: NAD(+) hydrolase sarm1 (1360 aa).

The segment at 27-52 (RITGGPGSISTTSASAITAPSTMSQT) is disordered. The segment covering 34–48 (SISTTSASAITAPST) has biased composition (low complexity). SAM domains follow at residues 690–754 (WSVE…LKRM) and 760–828 (KDTA…NSLP). A TIR domain is found at 837 to 981 (KTLDVFVSYR…KLERFLRGEK (145 aa)). Residues 846-847 (RR) and E876 contribute to the NAD(+) site. E919 is an active-site residue. Residues 997-1010 (VSYQRMHSNDSDYQ) are compositionally biased toward polar residues. Disordered regions lie at residues 997–1026 (VSYQ…GGGG), 1046–1085 (GQAN…SQIL), 1121–1148 (SAAG…LLDQ), 1192–1217 (NDSV…KSRS), and 1249–1343 (IPMT…GNNK). Gly residues predominate over residues 1012-1026 (GGAGAGSGAGTGGGG). Residues 1046–1073 (GQANHQANRYRQSPSPARQRGSTSQLSG) are compositionally biased toward polar residues. The segment covering 1125-1135 (LGHGSGSGMGS) has biased composition (gly residues). Residues 1321-1335 (SLTSNKTSNSSLGSN) show a composition bias toward low complexity.

This sequence belongs to the SARM1 family. As to expression, widely expressed in larval brains and adult brains.

Its subcellular location is the cytoplasm. It is found in the cell projection. The protein localises to the axon. The catalysed reaction is NAD(+) + H2O = ADP-D-ribose + nicotinamide + H(+). The enzyme catalyses NAD(+) = cyclic ADP-beta-D-ribose + nicotinamide + H(+). In terms of biological role, NAD(+) hydrolase, which plays a key role in axonal degeneration following injury by regulating NAD(+) metabolism. Acts as a negative regulator of MYD88- and TRIF-dependent toll-like receptor signaling pathway by promoting Wallerian degeneration, an injury-induced form of programmed subcellular death which involves degeneration of an axon distal to the injury site. Wallerian degeneration is triggered by NAD(+) depletion: in response to injury, it is activated and catalyzes cleavage of NAD(+) into ADP-D-ribose (ADPR), cyclic ADPR (cADPR) and nicotinamide; NAD(+) cleavage promoting axon destruction. Involved in the down-regulation of the tracheal immune response to Gram-negative bacteria. This is likely by mediating Tollo signaling in the tracheal epithelium. The polypeptide is NAD(+) hydrolase sarm1 (Drosophila melanogaster (Fruit fly)).